The chain runs to 966 residues: Protein mes-1 (966 aa).

The N-terminal stretch at 1–19 is a signal peptide; it reads MKIHHFLTLLCTFLPLTTT. The Extracellular portion of the chain corresponds to 20-470; sequence ALTNSTPLSL…QASDIPTSVE (451 aa). Residues Asn62, Asn126, Asn183, Asn214, Asn251, and Asn372 are each glycosylated (N-linked (GlcNAc...) asparagine). Residues 471–491 traverse the membrane as a helical segment; that stretch reads LMAVVLATSAIFALIALFLLY. Residues 492–966 lie on the Cytoplasmic side of the membrane; it reads RKRKRDKKAR…FKSVNVAATV (475 aa). The region spanning 656–966 is the Protein kinase domain; sequence HNFNERIEKQ…FKSVNVAATV (311 aa). ATP is bound by residues 662-670 and Lys685; that span reads IEKQAYWLM.

It belongs to the protein kinase superfamily.

It localises to the cell membrane. Functionally, during early embryogenesis, controls asymmetric cell division and the asymmetric localization of P granules of germline precursor P2 and its descendant P3. Probably upstream of tyrosine kinase src-1, plays a role in endoderm development by controlling spindle orientation during EMS blastomere cell division. Controls EMS spindle orientation probably by promoting lin-5 and gpr-1/2 enrichment at, and let-99 exclusion from the junction between P2 and EMS cells. This is Protein mes-1 from Caenorhabditis elegans.